The sequence spans 785 residues: MLTRPAQNALLKSMQPLFRFRGCLLAKSTSTPRRDISTSSRKLAHPTTVPIPPSVDDHALVALLDQPSSFGIVSRLFQTQGGLFGHKELQQPSGFITLAEATLVRAQILTNRILRARESQDELRKVVKNLDRLSDMLCGVIDLAELVRNAHPDRAWVEAANQAYETLCEFMNVLNTDVGLYDVLKAVLSDPTIVQGMGPEEYSTAQIFWHDFEKSAINLPPEQRQRFVSLSSEILVLGREFLQEANTARPPASIHASELAGLKDKGMGARLQLQAQFTQKDLLVYPGSLQAQMIMRCAPAEEPRRKLYIAANSSTPSQIELLERLLRTRAELARLVGKESFAHMTLSDKMAKSPENVQYFLDALMDYTRPYARKALRTLSMRKQAHLQTPPFPTIQPWDRDFYCPPEPPAPPIPLPPLTLGTVFAGLSRLFYHLYGISLRPAECAPGEVWHPHVHKLEVVDEDAGVIGWIYADLFARRGKPSGAAHYTVRCSRRTDDDDEAEDGSIPAAEPYVRVSQSFESSKRHRVRGQDGEFQLPLVVLVCEFARPSVSSGPTVLDWHEVMTLFHEMGHAMHSMIGRTEYQNVSGTRCATDFVELPSILMEHFLSSPTVLSLFDVSSSTPSSAWQVGNHHQDPCHSIDTHSQILLAAMDQIYHSPSVVDPSFSSTSALEALHKSRGLIPYVPGTSFQTQFGHLFGYGATYYSYLFDRAIASRVWSQVFHANPLNRELGDKYKREVLKFGGGRDPWKMISHLLDSPWLENGNADAMKEVGQWRIEDEVGQPGRH.

The transit peptide at 1–43 directs the protein to the mitochondrion; it reads MLTRPAQNALLKSMQPLFRFRGCLLAKSTSTPRRDISTSSRKL. His-567 contacts Zn(2+). The active site involves Glu-568. Positions 571 and 574 each coordinate Zn(2+).

The protein belongs to the peptidase M3 family. Zn(2+) is required as a cofactor.

It is found in the mitochondrion matrix. The catalysed reaction is Release of an N-terminal octapeptide as second stage of processing of some proteins imported into the mitochondrion.. Its function is as follows. Cleaves proteins, imported into the mitochondrion, to their mature size. While most mitochondrial precursor proteins are processed to the mature form in one step by mitochondrial processing peptidase (MPP), the sequential cleavage by MIP of an octapeptide after initial processing by MPP is a required step for a subgroup of nuclear-encoded precursor proteins destined for the matrix or the inner membrane. This chain is Mitochondrial intermediate peptidase (OCT1), found in Pleurotus djamor (Pink oyster mushroom).